Consider the following 65-residue polypeptide: Putative beta-neurotoxin RjAa12 (65 aa).

An LCN-type CS-alpha/beta domain is found at 1–64 (KEGYPVGRDG…VWDSSTNKCG (64 aa)). 4 disulfide bridges follow: Cys-11/Cys-63, Cys-15/Cys-37, Cys-22/Cys-44, and Cys-26/Cys-46.

The protein belongs to the long (4 C-C) scorpion toxin superfamily. Sodium channel inhibitor family. Beta subfamily. As to expression, expressed by the venom gland.

It is found in the secreted. Functionally, beta toxins bind voltage-independently at site-4 of sodium channels (Nav) and shift the voltage of activation toward more negative potentials thereby affecting sodium channel activation and promoting spontaneous and repetitive firing. In Rhopalurus junceus (Caribbean blue scorpion), this protein is Putative beta-neurotoxin RjAa12.